Consider the following 50-residue polypeptide: Defensin D1 (50 aa).

Disulfide bonds link Cys-3–Cys-50, Cys-14–Cys-35, Cys-20–Cys-44, and Cys-24–Cys-46.

Post-translationally, contains 4 disulfide bonds.

The protein resides in the secreted. Its function is as follows. Antimicrobial peptide active against fungi, Gram-positive and Gram-negative bacteria. Inhibits growth of hyphae in the fungi A.niger (IC(50)=3.5 ug/ml), B.sorokiniana (IC(50)=3.0 ug/ml), F.oxysporum (IC(50)=9.5 ug/ml), F.graminearum (IC(50)=6.9 ug/ml), F.culmorum (IC(50)=6.9 ug/ml) and B.cinerea (IC(50)=27.4 ug/ml). Has no effect on spore germination. Destroys spores in germinated conidia by disruption of cell walls and membranes in A.niger and B.sorokiniana. Causes vacuolization of germinated macro- and microconidia in F.oxysporum, F.graminearum and F.culmorum. Strongly inhibits growth of P.infestans on potato tubers above concentrations of 13.6 ug/ml. Inhibits growth of Gram-positive bacteria C.michiganensis and B.subtilis and of Gram-negative bacteria P.syringae, E.carotovora and E.coli. The chain is Defensin D1 from Nigella sativa (Black cumin).